The primary structure comprises 360 residues: Alanine racemase (360 aa).

Lys34 acts as the Proton acceptor; specific for D-alanine in catalysis. An N6-(pyridoxal phosphate)lysine modification is found at Lys34. Residue Arg129 participates in substrate binding. Tyr254 acts as the Proton acceptor; specific for L-alanine in catalysis. Residue Met302 coordinates substrate.

Belongs to the alanine racemase family. Pyridoxal 5'-phosphate serves as cofactor.

The catalysed reaction is L-alanine = D-alanine. It functions in the pathway amino-acid biosynthesis; D-alanine biosynthesis; D-alanine from L-alanine: step 1/1. Functionally, catalyzes the interconversion of L-alanine and D-alanine. May also act on other amino acids. This chain is Alanine racemase (alr), found in Pectobacterium atrosepticum (strain SCRI 1043 / ATCC BAA-672) (Erwinia carotovora subsp. atroseptica).